A 194-amino-acid polypeptide reads, in one-letter code: Clathrin light chain (194 aa).

The disordered stretch occupies residues 44 to 156; it reads TTFDNSNNNN…TDSTSGNTTH (113 aa). Low complexity predominate over residues 48–65; sequence NSNNNNNNNNHNNNSYNS. 2 stretches are compositionally biased toward basic and acidic residues: residues 89-115 and 124-146; these read EYLE…KIAE and YSER…KSLE. Positions 124–194 are required for binding clathrin heavy chain, localization to punctae, and for cytokinesis and fruiting body development; sequence YSEREAKKKT…LIRLKNQPIV (71 aa). Polar residues predominate over residues 147–156; sequence TDSTSGNTTH.

Belongs to the clathrin light chain family. As to quaternary structure, clathrin coats are formed from molecules containing 3 heavy chains and 3 light chains.

Its subcellular location is the cytoplasmic vesicle membrane. It localises to the membrane. The protein localises to the coated pit. Clathrin is the major protein of the polyhedral coat of coated pits and vesicles. In Dictyostelium discoideum (Social amoeba), this protein is Clathrin light chain (clc).